The chain runs to 170 residues: MNKASVVFSGLLMAVSASAIAATSSEDTDISKQPLEKVAPYPKAEKGMSRQVIYLPKQEHEENFKVELLIGKTLEVDCNRHMIGGTLETKTLSGWGYDYLVVEKLSEPASTMMACPDNTKQQKFIAANLGDAAMQRYNSRLPIVVYAPKDVEVKYRVWKAEDTVSKAEQK.

Positions 1–21 (MNKASVVFSGLLMAVSASAIA) are cleaved as a signal peptide. Cys-78 and Cys-115 are joined by a disulfide.

Belongs to the protease inhibitor I11 (ecotin) family. Homodimer.

The protein resides in the periplasm. Its function is as follows. General inhibitor of pancreatic serine proteases: inhibits chymotrypsin, trypsin, elastases, factor X, kallikrein as well as a variety of other proteases. This is Ecotin from Serratia proteamaculans (strain 568).